The sequence spans 114 residues: Iron-sulfur cluster insertion protein ErpA (114 aa).

The iron-sulfur cluster site is built by cysteine 42, cysteine 106, and cysteine 108.

It belongs to the HesB/IscA family. As to quaternary structure, homodimer. Iron-sulfur cluster serves as cofactor.

Its function is as follows. Required for insertion of 4Fe-4S clusters for at least IspG. The sequence is that of Iron-sulfur cluster insertion protein ErpA from Buchnera aphidicola subsp. Acyrthosiphon pisum (strain 5A).